The chain runs to 477 residues: Tyrosine-protein kinase transforming protein Fes (477 aa).

The tract at residues 49–76 (GEPPPVLLLQDDRHSTSSSEQEREGGRT) is disordered. Basic and acidic residues predominate over residues 58–74 (QDDRHSTSSSEQEREGG). The SH2 domain maps to 115–204 (WYHGALPRAE…KSGIVLNRAV (90 aa)). Positions 216-477 (LVLGEQIGRG…ELQSIRKRHR (262 aa)) constitute a Protein kinase domain. ATP is bound by residues 222 to 230 (IGRGNFGEV) and Lys-245. Asp-338 serves as the catalytic Proton acceptor. Tyr-368 carries the post-translational modification Phosphotyrosine; by autocatalysis.

Belongs to the protein kinase superfamily. Tyr protein kinase family. Fes/fps subfamily.

The enzyme catalyses L-tyrosyl-[protein] + ATP = O-phospho-L-tyrosyl-[protein] + ADP + H(+). The protein is Tyrosine-protein kinase transforming protein Fes (V-FES) of Feline sarcoma virus (strain Snyder-Theilen).